Reading from the N-terminus, the 376-residue chain is MEERTLVILGATGSIGTQTLDVLKKVKGIRLIGISFHSNLELAFKIVKEFNVKNVAITGDVEFEDSSINVWKGSHSIEEMLEALKPDITMVAVSGFSGLRAVLASLEHSKRVCLANKESLVCGGFLVKKKLKEKGTELIPVDSEHSAIFQVMEPEVEKVVLTASGGALRDWKISKIDRARPEDVLKHPVWNMGARITVDSATMVNKAFEVLEAMELFELPFEKIEVKIHREGLVHGAVVLPDGNVKMVVSPPDMRIPISYALFYPRRVALEPFFLRTISLSFEDPDPEKYPAFFLLKEIKDSYALRTAFNAADEVAVEAFLKGRIRFGGIHRVIEKTLEEFQGYPQPRTLDDVERIHFEAIKKAERVTEWLSSTSY.

T12, G13, S14, I15, N39, and N116 together coordinate NADPH. K117 contributes to the 1-deoxy-D-xylulose 5-phosphate binding site. An NADPH-binding site is contributed by E118. D142 contributes to the Mn(2+) binding site. 1-deoxy-D-xylulose 5-phosphate is bound by residues S143, E144, S164, and H187. Position 144 (E144) interacts with Mn(2+). G193 contacts NADPH. S200, N205, K206, and E209 together coordinate 1-deoxy-D-xylulose 5-phosphate. Position 209 (E209) interacts with Mn(2+).

The protein belongs to the DXR family. Mg(2+) serves as cofactor. Requires Mn(2+) as cofactor.

It carries out the reaction 2-C-methyl-D-erythritol 4-phosphate + NADP(+) = 1-deoxy-D-xylulose 5-phosphate + NADPH + H(+). It functions in the pathway isoprenoid biosynthesis; isopentenyl diphosphate biosynthesis via DXP pathway; isopentenyl diphosphate from 1-deoxy-D-xylulose 5-phosphate: step 1/6. Functionally, catalyzes the NADPH-dependent rearrangement and reduction of 1-deoxy-D-xylulose-5-phosphate (DXP) to 2-C-methyl-D-erythritol 4-phosphate (MEP). This is 1-deoxy-D-xylulose 5-phosphate reductoisomerase from Thermotoga maritima (strain ATCC 43589 / DSM 3109 / JCM 10099 / NBRC 100826 / MSB8).